The sequence spans 192 residues: Protein GrpE (192 aa).

The disordered stretch occupies residues 1–34 (MSSKEQKTPNEQVSEEMENTAEQQVEATQETGEC). Over residues 20-31 (TAEQQVEATQET) the composition is skewed to polar residues.

The protein belongs to the GrpE family. As to quaternary structure, homodimer.

It is found in the cytoplasm. Participates actively in the response to hyperosmotic and heat shock by preventing the aggregation of stress-denatured proteins, in association with DnaK and GrpE. It is the nucleotide exchange factor for DnaK and may function as a thermosensor. Unfolded proteins bind initially to DnaJ; upon interaction with the DnaJ-bound protein, DnaK hydrolyzes its bound ATP, resulting in the formation of a stable complex. GrpE releases ADP from DnaK; ATP binding to DnaK triggers the release of the substrate protein, thus completing the reaction cycle. Several rounds of ATP-dependent interactions between DnaJ, DnaK and GrpE are required for fully efficient folding. This is Protein GrpE from Yersinia pestis.